Here is a 484-residue protein sequence, read N- to C-terminus: Perphorin-2 (484 aa).

N-linked (GlcNAc...) asparagine glycosylation is found at Asn16, Asn240, Asn256, Asn265, Asn326, Asn330, Asn356, and Asn411.

Its subcellular location is the secreted. It localises to the extracellular space. The protein localises to the extracellular matrix. May be involved in conversion of asexual males and females to the sexual pathway. This Volvox carteri (Green alga) protein is Perphorin-2.